We begin with the raw amino-acid sequence, 307 residues long: ATP-dependent (S)-NAD(P)H-hydrate dehydratase (307 aa).

Positions 1–291 (MDHFLKLLPK…DEIPKLVRDV (291 aa)) constitute a YjeF C-terminal domain. (6S)-NADPHX contacts are provided by residues Gly96 and 150–156 (NIVEFSR). ATP-binding positions include 194–198 (KGEVD) and 214–223 (SSLRRCGGQG). Residue Asp224 participates in (6S)-NADPHX binding.

It belongs to the NnrD/CARKD family. Mg(2+) is required as a cofactor.

The enzyme catalyses (6S)-NADHX + ATP = ADP + phosphate + NADH + H(+). It carries out the reaction (6S)-NADPHX + ATP = ADP + phosphate + NADPH + H(+). Its function is as follows. Catalyzes the dehydration of the S-form of NAD(P)HX at the expense of ATP, which is converted to ADP. Together with NAD(P)HX epimerase, which catalyzes the epimerization of the S- and R-forms, the enzyme allows the repair of both epimers of NAD(P)HX, a damaged form of NAD(P)H that is a result of enzymatic or heat-dependent hydration. The sequence is that of ATP-dependent (S)-NAD(P)H-hydrate dehydratase from Caenorhabditis briggsae.